Here is a 346-residue protein sequence, read N- to C-terminus: Heterogeneous nuclear ribonucleoprotein A1 (346 aa).

2 consecutive RRM domains span residues 23-123 (RKIF…GVRE) and 114-191 (KRLY…KGLS). 2 stretches are compositionally biased toward basic and acidic residues: residues 92–107 (TVDPKRAVPRDDKNRS) and 189–215 (GLSKDEMSKAQMNRDRETRGGRSRDGQ). 2 disordered regions span residues 92 to 111 (TVDPKRAVPRDDKNRSESNV) and 189 to 346 (GLSK…NRNY). Composition is skewed to gly residues over residues 216–296 (RGGY…GWGG) and 303–331 (GGWGGPQQGGGGGGWGGQGQQQGGWGGQS). Over residues 332 to 346 (GAQQWAHAQGGNRNY) the composition is skewed to low complexity.

It localises to the nucleus. It is found in the chromosome. The protein resides in the telomere. Its function is as follows. This protein is a component of ribonucleosomes. Overexpression gradually increases telomere length, leading to increase lifespan. This chain is Heterogeneous nuclear ribonucleoprotein A1, found in Caenorhabditis elegans.